The sequence spans 216 residues: Ras-related protein Rab-11A (216 aa).

Gly-2 carries the post-translational modification N-acetylglycine. Residues Ser-20, Gly-21, Val-22, Gly-23, Lys-24, Ser-25, Asn-26, Asn-37, Leu-38, Ser-40, Ser-42, and Thr-43 each coordinate GTP. Ser-25 provides a ligand contact to Mg(2+). Positions 36-47 (FNLESKSTIGVE) match the Switch 1 motif. The Mg(2+) site is built by Thr-43 and Asp-66. The Switch 2 signature appears at 67-86 (TAGQERYRAITSAYYRGAVG). GTP is bound by residues Gly-69, Asn-124, Lys-125, Asp-127, Ala-155, and Leu-156. The disordered stretch occupies residues 183–211 (DRRENDMSPSNNVVPIHVPPTTENKPKVQ). 2 S-geranylgeranyl cysteine lipidation sites follow: Cys-212 and Cys-213. Residue Cys-213 is modified to Cysteine methyl ester. The propeptide at 214-216 (QNI) is removed in mature form.

This sequence belongs to the small GTPase superfamily. Rab family. Interacts (GTP-bound form) with RAB11FIPs (via their C-termini) including RAB11FIP1, RAB11FIP2, RAB11FIP3, RAB11FIP4 and RAB11FIP5 effectors. Forms a complex with RAB11FIP3 and dynein intermediate chain DYNC1LI1; the interaction between RAB11A1 and RAB11FIP3 is direct; the complex regulates endocytic trafficking. Interacts with EVI5; EVI5 and RAB11FIP3 may be mutually exclusive and compete for binding RAB11A. Interacts with SGSM1, SGSM2, SGSM3 and VIPAS39. Interacts with EXOC6 in a GTP-dependent manner. Interacts with RAB11FIP5. Interacts with STXBP6. Interacts (GDP-bound form) with ZFYVE27. Interacts with BIRC6/bruce. May interact with TBC1D14. Interacts with UNC119; in a cell cycle-dependent manner. GDP-bound and nucleotide-free forms interact with SH3BP5. Interacts (GDP-bound form) with KIF5A in a ZFYVE27-dependent manner. Interacts (GDP-bound form) with RELCH. Found in a complex composed of RELCH, OSBP1 and RAB11A. Interacts with TBC1D12. Interacts with DEF6. Interacts with ATP9A. Forms a heterotetramer with RAB11FIP3; the GTP-bound form is preferred for binding. Forms a complex with Rabin8/RAB3IP and RAB11FIP3, probably a heterohexamer with two of each protein subunit, where Rabin8/RAB3IP and RAB11FIP3 simultaneously bind to RAB11A; the complex promotes preciliary trafficking and cilia growth. Forms a complex containing RAB11A, ASAP1, Rabin8/RAB3IP, RAP11FIP3 and ARF4; the complex promotes preciliary trafficking; the complex binds to RHO in photoreceptor cells and promotes RHO ciliary transport. Interacts (GTP-bound form) with WDR44; the interaction prevents RAB11A-RAB3IP-RAB11FIP3 complex formation. It depends on Mg(2+) as a cofactor. In terms of tissue distribution, detected in various tissues, such as brain, testis, spleen, and heart.

It is found in the cell membrane. Its subcellular location is the endosome membrane. It localises to the recycling endosome membrane. The protein localises to the cleavage furrow. The protein resides in the cytoplasmic vesicle. It is found in the phagosome. Its subcellular location is the cytoplasmic vesicle membrane. It localises to the golgi apparatus. The protein localises to the trans-Golgi network. The enzyme catalyses GTP + H2O = GDP + phosphate + H(+). Regulated by guanine nucleotide exchange factors (GEFs) which promote the exchange of bound GDP for free GTP. Regulated by GTPase activating proteins (GAPs) which increase the GTP hydrolysis activity. Inhibited by GDP dissociation inhibitors (GDIs) which prevent Rab-GDP dissociation. Its function is as follows. The small GTPases Rab are key regulators of intracellular membrane trafficking, from the formation of transport vesicles to their fusion with membranes. Rabs cycle between an inactive GDP-bound form and an active GTP-bound form that is able to recruit to membranes different set of downstream effectors directly responsible for vesicle formation, movement, tethering and fusion. The small Rab GTPase RAB11A regulates endocytic recycling. Forms a functional Rab11/RAB11FIP3/dynein complex that regulates the movement of peripheral sorting endosomes (SE) along microtubule tracks toward the microtubule organizing center/centrosome, generating the endosomal recycling compartment (ERC). Acts as a major regulator of membrane delivery during cytokinesis. Together with MYO5B and RAB8A participates in epithelial cell polarization. Together with Rabin8/RAB3IP, RAB8A, the exocyst complex, PARD3, PRKCI, ANXA2, CDC42 and DNMBP promotes transcytosis of PODXL to the apical membrane initiation sites (AMIS), apical surface formation and lumenogenesis. Together with MYO5B participates in CFTR trafficking to the plasma membrane and TF (Transferrin) recycling in nonpolarized cells. Required in a complex with MYO5B and RAB11FIP2 for the transport of NPC1L1 to the plasma membrane. Participates in the sorting and basolateral transport of CDH1 from the Golgi apparatus to the plasma membrane. Regulates the recycling of FCGRT (receptor of Fc region of monomeric IgG) to basolateral membranes. May also play a role in melanosome transport and release from melanocytes. Promotes Rabin8/RAB3IP preciliary vesicular trafficking to mother centriole by forming a ciliary targeting complex containing Rab11, ASAP1, Rabin8/RAB3IP, RAB11FIP3 and ARF4, thereby regulating ciliogenesis initiation. On the contrary, upon LPAR1 receptor signaling pathway activation, interaction with phosphorylated WDR44 prevents Rab11-RAB3IP-RAB11FIP3 complex formation and cilia growth. Participates in the export of a subset of neosynthesized proteins through a Rab8-Rab10-Rab11-endososomal dependent export route via interaction with WDR44. The protein is Ras-related protein Rab-11A of Rattus norvegicus (Rat).